The following is a 258-amino-acid chain: Methylthioribulose-1-phosphate dehydratase (258 aa).

The segment covering 1–20 has biased composition (polar residues); the sequence is MTPPSNGQAAETNDHLVQSD. The tract at residues 1–21 is disordered; that stretch reads MTPPSNGQAAETNDHLVQSDN. Substrate is bound at residue cysteine 105. Zn(2+) is bound by residues histidine 123 and histidine 125. Glutamate 153 acts as the Proton donor/acceptor in catalysis. Histidine 210 is a Zn(2+) binding site.

Belongs to the aldolase class II family. MtnB subfamily. The cofactor is Zn(2+).

It localises to the cytoplasm. It carries out the reaction 5-(methylsulfanyl)-D-ribulose 1-phosphate = 5-methylsulfanyl-2,3-dioxopentyl phosphate + H2O. It participates in amino-acid biosynthesis; L-methionine biosynthesis via salvage pathway; L-methionine from S-methyl-5-thio-alpha-D-ribose 1-phosphate: step 2/6. Catalyzes the dehydration of methylthioribulose-1-phosphate (MTRu-1-P) into 2,3-diketo-5-methylthiopentyl-1-phosphate (DK-MTP-1-P). The polypeptide is Methylthioribulose-1-phosphate dehydratase (Chaetomium globosum (strain ATCC 6205 / CBS 148.51 / DSM 1962 / NBRC 6347 / NRRL 1970) (Soil fungus)).